Reading from the N-terminus, the 138-residue chain is Small ribosomal subunit protein uS11c (138 aa).

The segment at Met-1–Ala-22 is disordered. The segment covering Ser-9–Ala-22 has biased composition (basic residues).

This sequence belongs to the universal ribosomal protein uS11 family. Part of the 30S ribosomal subunit.

It is found in the plastid. It localises to the chloroplast. This chain is Small ribosomal subunit protein uS11c, found in Solanum bulbocastanum (Wild potato).